A 277-amino-acid polypeptide reads, in one-letter code: Large ribosomal subunit protein uL2 (277 aa).

Disordered regions lie at residues 32-58 (KSLT…RGGG) and 225-277 (VAMN…RRNK). The span at 258–277 (YKTRKKKRYSDKFIIKRRNK) shows a compositional bias: basic residues.

The protein belongs to the universal ribosomal protein uL2 family. As to quaternary structure, part of the 50S ribosomal subunit. Forms a bridge to the 30S subunit in the 70S ribosome.

Functionally, one of the primary rRNA binding proteins. Required for association of the 30S and 50S subunits to form the 70S ribosome, for tRNA binding and peptide bond formation. It has been suggested to have peptidyltransferase activity; this is somewhat controversial. Makes several contacts with the 16S rRNA in the 70S ribosome. This is Large ribosomal subunit protein uL2 from Borreliella afzelii (strain PKo) (Borrelia afzelii).